A 323-amino-acid polypeptide reads, in one-letter code: MIEFGNFYQLIAKNHLSHWLEILPAQIAAWQREQQHGLFKQWSNAVEFLPEITPWRLDLLHSVTAESEAPLSEGQLKRIDTLLRNLMPWRKGPFSLYGVNIDTEWRSDWKWERVLPHLSDLTGRTILDVGCGSGYHLWRMIGAGAHLAVGIDPTQLFLCQFEAVRKLLGNDQRAHLLPLGIEQLPALKAFDTVFSMGVLYHRRSPLEHLWQLKDQLVNEGELVLETLVVDGDENTVLVPGDRYAQMRNVYFIPSAPALKKWLEKCGLIDVRIADVCVTTTEEQRRTEWMVTESLADFLDPNDHSKTVEGYPAPLRAVLIARKP.

Carboxy-S-adenosyl-L-methionine is bound by residues Lys-91, Trp-105, Lys-110, Gly-130, Asp-152–Thr-154, Ile-181–Glu-182, Met-196, Tyr-200, and Arg-315.

This sequence belongs to the class I-like SAM-binding methyltransferase superfamily. CmoB family. Homotetramer.

The enzyme catalyses carboxy-S-adenosyl-L-methionine + 5-hydroxyuridine(34) in tRNA = 5-carboxymethoxyuridine(34) in tRNA + S-adenosyl-L-homocysteine + H(+). Catalyzes carboxymethyl transfer from carboxy-S-adenosyl-L-methionine (Cx-SAM) to 5-hydroxyuridine (ho5U) to form 5-carboxymethoxyuridine (cmo5U) at position 34 in tRNAs. In Salmonella arizonae (strain ATCC BAA-731 / CDC346-86 / RSK2980), this protein is tRNA U34 carboxymethyltransferase.